Reading from the N-terminus, the 97-residue chain is Conotoxin Cal6.1a (97 aa).

A signal peptide spans 1–22 (MKLTTVLVVALLVLAACQFTVT). Residues 23-46 (DNSGDDPENPSLRSVGENQNPDST) form a disordered region. A propeptide spanning residues 23-68 (DNSGDDPENPSLRSVGENQNPDSTKTITAWATRDMTNMRRGLNRPS) is cleaved from the precursor. Cystine bridges form between Cys71–Cys87, Cys78–Cys91, and Cys86–Cys96.

The protein belongs to the conotoxin O1 superfamily. Expressed by the venom duct.

Its subcellular location is the secreted. Functionally, probable neurotoxin with unknown target. Possibly targets ion channels. In Californiconus californicus (California cone), this protein is Conotoxin Cal6.1a.